The primary structure comprises 638 residues: Keratin, type II cytoskeletal 2 oral (638 aa).

A head region spans residues 1 to 182; that stretch reads MNRQVCKKSF…DPQIGQVKAQ (182 aa). Omega-N-methylarginine is present on residues arginine 85 and arginine 110. Positions 183–218 are coil 1A; the sequence is EREQIKTLNNKFASFIDKVRFLEQQNKVLETKWELL. The region spanning 183 to 496 is the IF rod domain; that stretch reads EREQIKTLNN…KLLEGEECRM (314 aa). A linker 1 region spans residues 219-237; it reads QQQTTGSGPSSLEPCFESY. The segment at 238-329 is coil 1B; sequence ISFLCKQLDS…TLYEMELSQM (92 aa). A linker 12 region spans residues 330–353; the sequence is QSHASDTSVVLSMDNNRCLDLGSI. The interval 354–492 is coil 2; sequence IAEVRAQYEE…ATYRKLLEGE (139 aa). The segment at 493–638 is tail; that stretch reads ECRMSGECQS…TSSSQHSSTK (146 aa). Positions 532–638 are disordered; sequence SGSGGYKGGS…TSSSQHSSTK (107 aa). Over residues 540-549 the composition is skewed to low complexity; sequence GSSSSSSSGY. Residues 550 to 572 show a composition bias toward gly residues; the sequence is GVSGGSGSGYGGVSSGSTGGRGS. Over residues 573-583 the composition is skewed to low complexity; that stretch reads SGSYQSSSSGS. Arginine 584 is subject to Omega-N-methylarginine. Residues 590–608 show a composition bias toward low complexity; that stretch reads SISVSHSGMGSSSGSIQTS. Residues 609–620 are compositionally biased toward gly residues; sequence GGSGYKSGGGGS. The span at 626–638 shows a compositional bias: low complexity; that stretch reads SQTTSSSQHSSTK.

Belongs to the intermediate filament family. As to quaternary structure, heterotetramer of two type I and two type II keratins.

Its function is as follows. Probably contributes to terminal cornification. This is Keratin, type II cytoskeletal 2 oral (KRT76) from Homo sapiens (Human).